We begin with the raw amino-acid sequence, 739 residues long: NAD(P)H-quinone oxidoreductase subunit 5, chloroplastic (739 aa).

The next 16 helical transmembrane spans lie at 9–29 (WVIPLLPLPVIMSMGFGLILI), 39–59 (IWAFPSVLLLSIAMVFSVQLS), 89–109 (IDPLTSIMLILITTVGILVLI), 125–145 (FVYISFFNTSMLGLVTSSNLI), 147–167 (IYFFWELVGMCSYLLIGFWFT), 185–205 (GDFGLLLGILGFFWITGSLEF), 219–239 (NGVNSLLTTLCAFLLFLGAVA), 258–278 (TPISALIQAATMVAAGIFLLA), 280–300 (LLPLFISLPLIMSFISLVGTI), 327–347 (LGYMMLALGIGSYQAALFHLI), 354–374 (ALLFLGSGSVIHSMEPLVGYS), 396–416 (TTFLWGTLSLCGIPPLACFWS), 425–445 (WLYSPFFGIIASFTAGLTAFY), 542–562 (LFPLLILLLFTLFIGFIGISF), 610–630 (TLAIFGLFIAYIFYGSAYSFF), and 719–739 (ISSYLFFFLCYVSLFLFFFLS).

It belongs to the complex I subunit 5 family. In terms of assembly, NDH is composed of at least 16 different subunits, 5 of which are encoded in the nucleus.

The protein localises to the plastid. Its subcellular location is the chloroplast thylakoid membrane. The catalysed reaction is a plastoquinone + NADH + (n+1) H(+)(in) = a plastoquinol + NAD(+) + n H(+)(out). It carries out the reaction a plastoquinone + NADPH + (n+1) H(+)(in) = a plastoquinol + NADP(+) + n H(+)(out). In terms of biological role, NDH shuttles electrons from NAD(P)H:plastoquinone, via FMN and iron-sulfur (Fe-S) centers, to quinones in the photosynthetic chain and possibly in a chloroplast respiratory chain. The immediate electron acceptor for the enzyme in this species is believed to be plastoquinone. Couples the redox reaction to proton translocation, and thus conserves the redox energy in a proton gradient. This Triticum aestivum (Wheat) protein is NAD(P)H-quinone oxidoreductase subunit 5, chloroplastic (ndhF).